Reading from the N-terminus, the 240-residue chain is Ribonuclease HII (240 aa).

An RNase H type-2 domain is found at 31–222 (RLIAGVDEAG…VRRALGLETA (192 aa)). Residues Asp-37, Glu-38, and Asp-130 each contribute to the a divalent metal cation site.

This sequence belongs to the RNase HII family. Mn(2+) serves as cofactor. The cofactor is Mg(2+).

Its subcellular location is the cytoplasm. It carries out the reaction Endonucleolytic cleavage to 5'-phosphomonoester.. Functionally, endonuclease that specifically degrades the RNA of RNA-DNA hybrids. This is Ribonuclease HII from Xanthomonas campestris pv. campestris (strain B100).